Here is a 250-residue protein sequence, read N- to C-terminus: Flavin-dependent thymidylate synthase (250 aa).

One can recognise a ThyX domain in the interval 7-233 (LRVQLIAKTE…PAVFADFEVT (227 aa)). DUMP is bound by residues 92–95 (ELIR), 103–107 (QLSQR), and R172. FAD is bound by residues 95–97 (RHR) and Q103. A ThyX motif motif is present at residues 95 to 105 (RHRHFSYSQLS). FAD is bound by residues 188 to 190 (NYR) and H194. A dUMP-binding site is contributed by R199. The active-site Involved in ionization of N3 of dUMP, leading to its activation is the R199.

This sequence belongs to the thymidylate synthase ThyX family. As to quaternary structure, homotetramer. The cofactor is FAD.

The catalysed reaction is dUMP + (6R)-5,10-methylene-5,6,7,8-tetrahydrofolate + NADPH + H(+) = dTMP + (6S)-5,6,7,8-tetrahydrofolate + NADP(+). Its pathway is pyrimidine metabolism; dTTP biosynthesis. Catalyzes the reductive methylation of 2'-deoxyuridine-5'-monophosphate (dUMP) to 2'-deoxythymidine-5'-monophosphate (dTMP) while utilizing 5,10-methylenetetrahydrofolate (mTHF) as the methyl donor, and NADPH and FADH(2) as the reductant. The chain is Flavin-dependent thymidylate synthase from Mycobacterium marinum (strain ATCC BAA-535 / M).